Here is a 204-residue protein sequence, read N- to C-terminus: Holliday junction branch migration complex subunit RuvA (204 aa).

A domain I region spans residues 1–64; the sequence is MIGRLRGTLI…EDAQLLYGFN (64 aa). The interval 65-143 is domain II; it reads TVSERALFRE…GWGAGDLFTP (79 aa). The segment at 144–155 is flexible linker; the sequence is ATDAAPVDSTPV. Residues 156–204 form a domain III region; that stretch reads IAQNAQEEAMSALLALGYKPPQASKAVSQVAKAGMSSEELIREALKSMV.

Belongs to the RuvA family. Homotetramer. Forms an RuvA(8)-RuvB(12)-Holliday junction (HJ) complex. HJ DNA is sandwiched between 2 RuvA tetramers; dsDNA enters through RuvA and exits via RuvB. An RuvB hexamer assembles on each DNA strand where it exits the tetramer. Each RuvB hexamer is contacted by two RuvA subunits (via domain III) on 2 adjacent RuvB subunits; this complex drives branch migration. In the full resolvosome a probable DNA-RuvA(4)-RuvB(12)-RuvC(2) complex forms which resolves the HJ.

It localises to the cytoplasm. In terms of biological role, the RuvA-RuvB-RuvC complex processes Holliday junction (HJ) DNA during genetic recombination and DNA repair, while the RuvA-RuvB complex plays an important role in the rescue of blocked DNA replication forks via replication fork reversal (RFR). RuvA specifically binds to HJ cruciform DNA, conferring on it an open structure. The RuvB hexamer acts as an ATP-dependent pump, pulling dsDNA into and through the RuvAB complex. HJ branch migration allows RuvC to scan DNA until it finds its consensus sequence, where it cleaves and resolves the cruciform DNA. This Vibrio cholerae serotype O1 (strain ATCC 39541 / Classical Ogawa 395 / O395) protein is Holliday junction branch migration complex subunit RuvA.